A 238-amino-acid chain; its full sequence is Large ribosomal subunit protein bL25 (238 aa).

The segment covering 1-10 (MATTVKELKA) has biased composition (basic and acidic residues). The tract at residues 1–24 (MATTVKELKATARPKSGKGAARAE) is disordered.

Belongs to the bacterial ribosomal protein bL25 family. CTC subfamily. As to quaternary structure, part of the 50S ribosomal subunit; part of the 5S rRNA/L5/L18/L25 subcomplex. Contacts the 5S rRNA. Binds to the 5S rRNA independently of L5 and L18.

Its function is as follows. This is one of the proteins that binds to the 5S RNA in the ribosome where it forms part of the central protuberance. The sequence is that of Large ribosomal subunit protein bL25 from Bradyrhizobium diazoefficiens (strain JCM 10833 / BCRC 13528 / IAM 13628 / NBRC 14792 / USDA 110).